We begin with the raw amino-acid sequence, 66 residues long: DNA gyrase inhibitor YacG (66 aa).

4 residues coordinate Zn(2+): cysteine 10, cysteine 13, cysteine 29, and cysteine 33. The tract at residues 46–66 is disordered; it reads KRIPSDVQITDSDEWSDETRY. Acidic residues predominate over residues 56–66; that stretch reads DSDEWSDETRY.

This sequence belongs to the DNA gyrase inhibitor YacG family. As to quaternary structure, interacts with GyrB. It depends on Zn(2+) as a cofactor.

Its function is as follows. Inhibits all the catalytic activities of DNA gyrase by preventing its interaction with DNA. Acts by binding directly to the C-terminal domain of GyrB, which probably disrupts DNA binding by the gyrase. The protein is DNA gyrase inhibitor YacG of Sodalis glossinidius (strain morsitans).